A 174-amino-acid polypeptide reads, in one-letter code: Methylated-DNA--protein-cysteine methyltransferase (174 aa).

Cys144 serves as the catalytic Nucleophile; methyl group acceptor.

This sequence belongs to the MGMT family.

Its subcellular location is the cytoplasm. It catalyses the reaction a 6-O-methyl-2'-deoxyguanosine in DNA + L-cysteinyl-[protein] = S-methyl-L-cysteinyl-[protein] + a 2'-deoxyguanosine in DNA. The catalysed reaction is a 4-O-methyl-thymidine in DNA + L-cysteinyl-[protein] = a thymidine in DNA + S-methyl-L-cysteinyl-[protein]. In terms of biological role, involved in the cellular defense against the biological effects of O6-methylguanine (O6-MeG) and O4-methylthymine (O4-MeT) in DNA. Repairs the methylated nucleobase in DNA by stoichiometrically transferring the methyl group to a cysteine residue in the enzyme. This is a suicide reaction: the enzyme is irreversibly inactivated. The protein is Methylated-DNA--protein-cysteine methyltransferase of Pyrococcus furiosus (strain ATCC 43587 / DSM 3638 / JCM 8422 / Vc1).